A 185-amino-acid polypeptide reads, in one-letter code: Ribosome-recycling factor (185 aa).

This sequence belongs to the RRF family.

The protein localises to the cytoplasm. Functionally, responsible for the release of ribosomes from messenger RNA at the termination of protein biosynthesis. May increase the efficiency of translation by recycling ribosomes from one round of translation to another. This chain is Ribosome-recycling factor, found in Geotalea daltonii (strain DSM 22248 / JCM 15807 / FRC-32) (Geobacter daltonii).